The following is a 205-amino-acid chain: Small ribosomal subunit protein uS4c (205 aa).

Residues 93–156 (MRLDNTVFRL…KSRNLVLNNL (64 aa)) enclose the S4 RNA-binding domain.

This sequence belongs to the universal ribosomal protein uS4 family. In terms of assembly, part of the 30S ribosomal subunit. Contacts protein S5. The interaction surface between S4 and S5 is involved in control of translational fidelity.

It is found in the plastid. It localises to the chloroplast. In terms of biological role, one of the primary rRNA binding proteins, it binds directly to 16S rRNA where it nucleates assembly of the body of the 30S subunit. Its function is as follows. With S5 and S12 plays an important role in translational accuracy. This chain is Small ribosomal subunit protein uS4c (rps4), found in Mesostigma viride (Green alga).